Consider the following 389-residue polypeptide: MSQFVLPAVASEGIINWPFLTGFMLGQFSVGLVLLIFVRFFIFSDQTEPDINTQRRTAKVLPTGNPSTDAILEKTYYNTKTHQPESLDWFSVLVAQALYQLRDEVRGNDEVLERLNEILKSDKLPGFLDTINVVDLDIGDAFPQFGACKVNKDESGDLEAEIKVSLEDTIKLGVETKMLLNFPIPKFASVPVSLSVSLVKFSGTLTVAIRSAFNSGEANRVLVSFAPDYELQWKIESSVGSTQKLQNAEKISRLIESRIRRWFKDRCVYPEYQQFELPKLWRKTSAPPPSAGAGTGTSTGVPPSPFPQPANPSSVPKPLELPGGFPHRNMSMSSQRPNINNPKFIRSMSVNTRPTYSSSFYEMQGTAGSSSGSAVADEAYRSLQTSPRR.

Residues 1 to 22 (MSQFVLPAVASEGIINWPFLTG) lie on the Lumenal side of the membrane. Residues 23 to 43 (FMLGQFSVGLVLLIFVRFFIF) form a helical membrane-spanning segment. The Cytoplasmic segment spans residues 44-389 (SDQTEPDINT…YRSLQTSPRR (346 aa)). The SMP-LTD domain occupies 83 to 278 (QPESLDWFSV…YPEYQQFELP (196 aa)). 2 disordered regions span residues 283-345 (KTSA…PKFI) and 360-389 (FYEMQGTAGSSSGSAVADEAYRSLQTSPRR). Over residues 330–341 (MSMSSQRPNINN) the composition is skewed to polar residues.

The protein belongs to the MMM1 family. As to quaternary structure, homodimer. Component of the ER-mitochondria encounter structure (ERMES) or MDM complex, composed of MMM1, MDM10, MDM12 and MDM34. An MMM1 homodimer associates with one molecule of MDM12 on each side in a pairwise head-to-tail manner, and the SMP-LTD domains of MMM1 and MDM12 generate a continuous hydrophobic tunnel for phospholipid trafficking.

The protein resides in the endoplasmic reticulum membrane. Functionally, component of the ERMES/MDM complex, which serves as a molecular tether to connect the endoplasmic reticulum (ER) and mitochondria. Components of this complex are involved in the control of mitochondrial shape and protein biogenesis, and function in nonvesicular lipid trafficking between the ER and mitochondria. The MDM12-MMM11 subcomplex functions in the major beta-barrel assembly pathway that is responsible for biogenesis of all outer membrane beta-barrel proteins, and acts in a late step after the SAM complex. The MDM10-MDM12-MMM1 subcomplex further acts in the TOM40-specific pathway after the action of the MDM12-MMM1 complex. Essential for establishing and maintaining the structure of mitochondria and maintenance of mtDNA nucleoids. The protein is Maintenance of mitochondrial morphology protein 1-1 of Yarrowia lipolytica (strain CLIB 122 / E 150) (Yeast).